The chain runs to 269 residues: Energy-coupling factor transporter ATP-binding protein EcfA1 (269 aa).

The ABC transporter domain maps to 8–242 (IVFKNVSFQY…AEELTTIGLD (235 aa)). 42–49 (GHNGSGKS) is a binding site for ATP.

It belongs to the ABC transporter superfamily. Energy-coupling factor EcfA family. As to quaternary structure, forms a stable energy-coupling factor (ECF) transporter complex composed of 2 membrane-embedded substrate-binding proteins (S component), 2 ATP-binding proteins (A component) and 2 transmembrane proteins (T component).

Its subcellular location is the cell membrane. Functionally, ATP-binding (A) component of a common energy-coupling factor (ECF) ABC-transporter complex. Unlike classic ABC transporters this ECF transporter provides the energy necessary to transport a number of different substrates. The polypeptide is Energy-coupling factor transporter ATP-binding protein EcfA1 (Staphylococcus aureus (strain MRSA252)).